A 421-amino-acid chain; its full sequence is Fasciclin-like arabinogalactan protein ARB_02922 (421 aa).

The first 17 residues, 1-17, serve as a signal peptide directing secretion; that stretch reads MLLYYILVALWATVTYA. 2 FAS1 domains span residues 18–167 and 169–296; these read KSFS…DRPL and LPQS…SDVL. Residues asparagine 52, asparagine 75, asparagine 80, asparagine 120, asparagine 145, asparagine 181, asparagine 223, and asparagine 300 are each glycosylated (N-linked (GlcNAc...) asparagine). Residues 300–401 form a disordered region; the sequence is NDTAKPVPNA…NTPQPGAAAT (102 aa). 2 stretches are compositionally biased toward gly residues: residues 344–356 and 372–387; these read TSGGEGGGGGGGE and SGGGGGGGGGAGGGPG. A compositionally biased stretch (low complexity) spans 388 to 401; sequence PTATNTPQPGAAAT. Residue glycine 397 is the site of GPI-anchor amidated glycine attachment. A propeptide spans 398-421 (removed in mature form); the sequence is AAATERAKAGLAAVVGLGVVLINA.

It belongs to the fasciclin-like AGP family.

It localises to the cell membrane. In terms of biological role, may be a cell surface adhesion protein. In Arthroderma benhamiae (strain ATCC MYA-4681 / CBS 112371) (Trichophyton mentagrophytes), this protein is Fasciclin-like arabinogalactan protein ARB_02922.